The primary structure comprises 466 residues: tRNA-2-methylthio-N(6)-dimethylallyladenosine synthase (466 aa).

Positions 2-118 (KRFYIHTIGC…LPGHIQAVAH (117 aa)) constitute an MTTase N-terminal domain. Residues C11, C47, C81, C157, C161, and C164 each contribute to the [4Fe-4S] cluster site. Residues 143-372 (DSSGVTGFIT…LELQNRITAE (230 aa)) form the Radical SAM core domain. The 79-residue stretch at 375-453 (RALEGRVEQV…AHSLSGIAVG (79 aa)) folds into the TRAM domain.

Belongs to the methylthiotransferase family. MiaB subfamily. As to quaternary structure, monomer. [4Fe-4S] cluster is required as a cofactor.

The protein resides in the cytoplasm. The enzyme catalyses N(6)-dimethylallyladenosine(37) in tRNA + (sulfur carrier)-SH + AH2 + 2 S-adenosyl-L-methionine = 2-methylsulfanyl-N(6)-dimethylallyladenosine(37) in tRNA + (sulfur carrier)-H + 5'-deoxyadenosine + L-methionine + A + S-adenosyl-L-homocysteine + 2 H(+). Catalyzes the methylthiolation of N6-(dimethylallyl)adenosine (i(6)A), leading to the formation of 2-methylthio-N6-(dimethylallyl)adenosine (ms(2)i(6)A) at position 37 in tRNAs that read codons beginning with uridine. This chain is tRNA-2-methylthio-N(6)-dimethylallyladenosine synthase, found in Desulfosudis oleivorans (strain DSM 6200 / JCM 39069 / Hxd3) (Desulfococcus oleovorans).